A 235-amino-acid chain; its full sequence is Exotoxin type C (235 aa).

An N-terminal signal peptide occupies residues 1-27; it reads MKKINIIKIVFIITVILISTISPIIKS. Zn(2+)-binding residues include His-194, His-228, and Asp-230.

The protein belongs to the staphylococcal/streptococcal toxin family.

In terms of biological role, superantigen that acts as a causative agent of the symptoms associated with scarlet fever. Has been associated with streptococcal toxic shock-like disease and may play a role in the early events of rheumatic fever. Superantigens cross-link major histocompatibility complex (MHC) class II and T-cell receptor (TCR) molecules, resulting in an overstimulation of T-cells associated with a massive release of pyrogenic and inflammatory cytokines. In Streptococcus pyogenes serotype M1, this protein is Exotoxin type C (speC).